We begin with the raw amino-acid sequence, 438 residues long: Trigger factor (438 aa).

A PPIase FKBP-type domain is found at 160-245 (DDKVTIDFVG…VKKIQQAELP (86 aa)).

It belongs to the FKBP-type PPIase family. Tig subfamily.

It is found in the cytoplasm. The enzyme catalyses [protein]-peptidylproline (omega=180) = [protein]-peptidylproline (omega=0). In terms of biological role, involved in protein export. Acts as a chaperone by maintaining the newly synthesized protein in an open conformation. Functions as a peptidyl-prolyl cis-trans isomerase. In Francisella tularensis subsp. tularensis (strain FSC 198), this protein is Trigger factor.